A 96-amino-acid polypeptide reads, in one-letter code: Guanyl-specific ribonuclease Sa (96 aa).

Cys7 and Cys96 are oxidised to a cystine. Catalysis depends on Glu54, which acts as the Proton acceptor. The active-site Proton donor is the His85.

Belongs to the ribonuclease N1/T1 family.

It localises to the secreted. The catalysed reaction is [RNA] containing guanosine + H2O = an [RNA fragment]-3'-guanosine-3'-phosphate + a 5'-hydroxy-ribonucleotide-3'-[RNA fragment].. The chain is Guanyl-specific ribonuclease Sa (rnaSA) from Kitasatospora aureofaciens (Streptomyces aureofaciens).